The primary structure comprises 158 residues: MNKQILTLALCIGLCLAVGFAGSTFTPKPASWYYTTLVKPSWNPPDWLFPPVWTILFIMMGTALAKVLGTGWKKNEVNVGVVLFAIQLMLNLGWSASFFGMQSPLAGLVDIVLLWIFIVLTMLAFARVSKPASLLLVPYLCWVSFASYLNFTILQLNP.

The next 5 membrane-spanning stretches (helical) occupy residues 5 to 25 (ILTL…GSTF), 48 to 68 (LFPP…AKVL), 79 to 99 (VGVV…ASFF), 105 to 125 (LAGL…MLAF), and 134 to 154 (LLLV…FTIL).

The protein belongs to the TspO/BZRP family.

The protein resides in the membrane. It is found in the cell membrane. In terms of biological role, binds tetrapyrroles and promotes the photooxidative degradation of protoporphyrin IX. Can bind the benzodiazepine receptor agonist PK-11195 (in vitro); this interferes with photooxidative tetrapyrrole degradation. May play a role in the transmembrane transport of tetrapyrroles and similar compounds. This Chlorobaculum tepidum (strain ATCC 49652 / DSM 12025 / NBRC 103806 / TLS) (Chlorobium tepidum) protein is Tryptophan-rich protein TspO.